The sequence spans 502 residues: Lysine--tRNA ligase (502 aa).

E410 and E417 together coordinate Mg(2+).

It belongs to the class-II aminoacyl-tRNA synthetase family. In terms of assembly, homodimer. Requires Mg(2+) as cofactor.

The protein resides in the cytoplasm. It catalyses the reaction tRNA(Lys) + L-lysine + ATP = L-lysyl-tRNA(Lys) + AMP + diphosphate. The polypeptide is Lysine--tRNA ligase (Photobacterium profundum (strain SS9)).